The primary structure comprises 155 residues: Endoribonuclease YbeY (155 aa).

The Zn(2+) site is built by His-117, His-121, and His-127.

The protein belongs to the endoribonuclease YbeY family. Zn(2+) serves as cofactor.

It is found in the cytoplasm. Functionally, single strand-specific metallo-endoribonuclease involved in late-stage 70S ribosome quality control and in maturation of the 3' terminus of the 16S rRNA. This is Endoribonuclease YbeY from Dichelobacter nodosus (strain VCS1703A).